A 541-amino-acid polypeptide reads, in one-letter code: Calcium-dependent protein kinase 9 (541 aa).

Residues 1–75 (MGNCFAKNHG…PGLSPKTTTK (75 aa)) form a disordered region. Glycine 2 carries N-myristoyl glycine lipidation. The segment covering 14–54 (PQQNGNTTRSVEVGVTNQDPPSYTPQARTTQQPEKPGSVNS) has biased composition (polar residues). At serine 69 the chain carries Phosphoserine. The 259-residue stretch at 91–349 (YTLGKELGRG…AADVLQHPWL (259 aa)) folds into the Protein kinase domain. ATP is bound by residues 97–105 (LGRGQFGVT) and lysine 120. Catalysis depends on aspartate 215, which acts as the Proton acceptor. Serine 255 carries the phosphoserine modification. An autoinhibitory domain region spans residues 355 to 385 (ASDKPIDSAVLSRMKQFRAMNKLKKLALKVI). EF-hand domains lie at 392–427 (EEIQ…LGSK), 428–463 (LTEA…RHRL), 464–499 (ESNE…YGMG), and 500–534 (DDAT…GNPQ). Ca(2+) is bound by residues aspartate 405, aspartate 407, serine 409, threonine 411, glutamate 416, aspartate 441, aspartate 443, asparagine 445, serine 447, glutamate 452, aspartate 477, aspartate 479, serine 481, tyrosine 483, glutamate 488, aspartate 512, aspartate 514, aspartate 516, arginine 518, and glutamate 523.

Belongs to the protein kinase superfamily. Ser/Thr protein kinase family. CDPK subfamily.

The protein resides in the cell membrane. It carries out the reaction L-seryl-[protein] + ATP = O-phospho-L-seryl-[protein] + ADP + H(+). The enzyme catalyses L-threonyl-[protein] + ATP = O-phospho-L-threonyl-[protein] + ADP + H(+). With respect to regulation, activated by calcium. Autophosphorylation may play an important role in the regulation of the kinase activity. May play a role in signal transduction pathways that involve calcium as a second messenger. This is Calcium-dependent protein kinase 9 (CPK9) from Arabidopsis thaliana (Mouse-ear cress).